Here is a 224-residue protein sequence, read N- to C-terminus: Biosynthetic peptidoglycan transglycosylase (224 aa).

A helical membrane pass occupies residues 12-32 (ILVVLAILPVFLLLVYSLPFV).

Belongs to the glycosyltransferase 51 family.

It is found in the cell inner membrane. It carries out the reaction [GlcNAc-(1-&gt;4)-Mur2Ac(oyl-L-Ala-gamma-D-Glu-L-Lys-D-Ala-D-Ala)](n)-di-trans,octa-cis-undecaprenyl diphosphate + beta-D-GlcNAc-(1-&gt;4)-Mur2Ac(oyl-L-Ala-gamma-D-Glu-L-Lys-D-Ala-D-Ala)-di-trans,octa-cis-undecaprenyl diphosphate = [GlcNAc-(1-&gt;4)-Mur2Ac(oyl-L-Ala-gamma-D-Glu-L-Lys-D-Ala-D-Ala)](n+1)-di-trans,octa-cis-undecaprenyl diphosphate + di-trans,octa-cis-undecaprenyl diphosphate + H(+). Its pathway is cell wall biogenesis; peptidoglycan biosynthesis. Peptidoglycan polymerase that catalyzes glycan chain elongation from lipid-linked precursors. This chain is Biosynthetic peptidoglycan transglycosylase, found in Brucella melitensis biotype 1 (strain ATCC 23456 / CCUG 17765 / NCTC 10094 / 16M).